We begin with the raw amino-acid sequence, 116 residues long: Large ribosomal subunit protein bL17 (116 aa).

This sequence belongs to the bacterial ribosomal protein bL17 family. Part of the 50S ribosomal subunit. Contacts protein L32.

The sequence is that of Large ribosomal subunit protein bL17 from Synechococcus sp. (strain CC9902).